The primary structure comprises 157 residues: E3 ubiquitin-protein ligase RHA1B (157 aa).

The RING-type; atypical zinc finger occupies 85-129 (CTVCLSDFVSDDKIRQLPKCGHVFHHRCLDRWIVDCNKITCPICR).

The enzyme catalyses S-ubiquitinyl-[E2 ubiquitin-conjugating enzyme]-L-cysteine + [acceptor protein]-L-lysine = [E2 ubiquitin-conjugating enzyme]-L-cysteine + N(6)-ubiquitinyl-[acceptor protein]-L-lysine.. It functions in the pathway protein modification; protein ubiquitination. Possesses E3 ubiquitin-protein ligase activity when associated with the E2 enzyme UBC8 in vitro. The sequence is that of E3 ubiquitin-protein ligase RHA1B from Arabidopsis thaliana (Mouse-ear cress).